A 199-amino-acid polypeptide reads, in one-letter code: Dephospho-CoA kinase (199 aa).

The DPCK domain maps to 3–199 (RIGLTGGIGS…HCKYLQIAQT (197 aa)). 11-16 (GSGKST) contacts ATP.

It belongs to the CoaE family.

The protein localises to the cytoplasm. The catalysed reaction is 3'-dephospho-CoA + ATP = ADP + CoA + H(+). Its pathway is cofactor biosynthesis; coenzyme A biosynthesis; CoA from (R)-pantothenate: step 5/5. Catalyzes the phosphorylation of the 3'-hydroxyl group of dephosphocoenzyme A to form coenzyme A. The polypeptide is Dephospho-CoA kinase (Coxiella burnetii (strain RSA 493 / Nine Mile phase I)).